A 434-amino-acid polypeptide reads, in one-letter code: 3-phosphoshikimate 1-carboxyvinyltransferase (434 aa).

Positions 22, 23, and 27 each coordinate 3-phosphoshikimate. Residue lysine 22 participates in phosphoenolpyruvate binding. Phosphoenolpyruvate-binding residues include glycine 93 and arginine 121. Residues serine 168, serine 169, glutamine 170, serine 199, aspartate 320, and lysine 347 each contribute to the 3-phosphoshikimate site. Position 170 (glutamine 170) interacts with phosphoenolpyruvate. Aspartate 320 serves as the catalytic Proton acceptor. 3 residues coordinate phosphoenolpyruvate: arginine 351, arginine 395, and lysine 420.

The protein belongs to the EPSP synthase family. As to quaternary structure, monomer.

It localises to the cytoplasm. The enzyme catalyses 3-phosphoshikimate + phosphoenolpyruvate = 5-O-(1-carboxyvinyl)-3-phosphoshikimate + phosphate. It functions in the pathway metabolic intermediate biosynthesis; chorismate biosynthesis; chorismate from D-erythrose 4-phosphate and phosphoenolpyruvate: step 6/7. Functionally, catalyzes the transfer of the enolpyruvyl moiety of phosphoenolpyruvate (PEP) to the 5-hydroxyl of shikimate-3-phosphate (S3P) to produce enolpyruvyl shikimate-3-phosphate and inorganic phosphate. In Cupriavidus necator (strain ATCC 17699 / DSM 428 / KCTC 22496 / NCIMB 10442 / H16 / Stanier 337) (Ralstonia eutropha), this protein is 3-phosphoshikimate 1-carboxyvinyltransferase.